The chain runs to 3649 residues: N-(5-amino-5-carboxypentanoyl)-L-cysteinyl-D-valine synthase (3649 aa).

A domain 1 (adipate-activating) region spans residues 401–861 (SRDRAYVTYT…LAGHLESQGH (461 aa)). 3 Carrier domains span residues 783 to 860 (APLL…ESQG), 1859 to 1936 (APVS…QAAA), and 2909 to 2984 (APRD…LSGL). An O-(pantetheine 4'-phosphoryl)serine mark is found at S820, S1896, and S2944. Residues 1014–1937 (HHIILDGWSL…QAEHIQAAAL (924 aa)) are domain 2 (cysteine-activating). The interval 2079-2985 (HHSCFDGWSW…FVDNVLSGLA (907 aa)) is domain 3 (valine-activating). The active-site For thioesterase activity is the S3502.

This sequence belongs to the ATP-dependent AMP-binding enzyme family. Pantetheine 4'-phosphate is required as a cofactor.

The enzyme catalyses L-2-aminoadipate + L-valine + L-cysteine + 3 ATP + H2O = N-[(5S)-5-amino-5-carboxypentanoyl]-L-cysteinyl-D-valine + 3 AMP + 3 diphosphate + 3 H(+). Its pathway is antibiotic biosynthesis; penicillin G biosynthesis; penicillin G from L-alpha-aminoadipate and L-cysteine and L-valine: step 1/3. Each of the constituent amino acids of the tripeptide acv are activated as aminoacyl-adenylates with peptide bonds formed through the participation of amino acid thioester intermediates. This is N-(5-amino-5-carboxypentanoyl)-L-cysteinyl-D-valine synthase (pcbAB) from Amycolatopsis lactamdurans (Nocardia lactamdurans).